Here is a 615-residue protein sequence, read N- to C-terminus: Zinc finger protein 653 (615 aa).

3 disordered regions span residues 1–46 (MAER…ARRR), 93–115 (RSGR…KRRR), and 174–235 (PLSD…SGLI). Residues 7 to 25 (EPGAEAEAGAGGEAAAEEG) are compositionally biased toward low complexity. The segment covering 106–115 (KKPKRKKRRR) has biased composition (basic residues). Composition is skewed to low complexity over residues 192-203 (GSSDSSSSGSSS) and 212-232 (QPAK…TGSS). 5 C2H2-type zinc fingers span residues 467–492 (FHCP…NLVH), 498–522 (KVCP…MIIH), 528–550 (FTCE…RRTH), 556–578 (LQCE…MKKH), and 586–609 (FTCD…LKSH).

It belongs to the krueppel C2H2-type zinc-finger protein family. Interacts with NR5A1. Highly expressed in testis and spleen. Moderately expressed in lung, adrenal gland, uterus, and ovary. Very low expression in pancreas, heart, skeletal muscle, adipose tissue, kidney, and liver.

Its subcellular location is the nucleus. Transcriptional repressor. May repress NR5A1, PPARG, NR1H3, NR4A2, ESR1 and NR3C1 transcriptional activity. The chain is Zinc finger protein 653 (Znf653) from Mus musculus (Mouse).